The chain runs to 1026 residues: Probable DNA-directed RNA polymerase II subunit RPB1 homolog (1026 aa).

7 residues coordinate Zn(2+): cysteine 62, cysteine 65, cysteine 72, histidine 75, cysteine 102, cysteine 105, and cysteine 142. Mg(2+) is bound by residues aspartate 588, aspartate 590, and aspartate 592.

It belongs to the RNA polymerase beta' chain family.

The enzyme catalyses RNA(n) + a ribonucleoside 5'-triphosphate = RNA(n+1) + diphosphate. Functionally, component of the DNA-dependent RNA polymerase that catalyzes the transcription of DNA into RNA using the four ribonucleoside triphosphates as substrates. Largest and catalytic component of RNA polymerase II which synthesizes mRNA precursors and many functional non-coding RNAs. Forms the polymerase active center together with the second largest subunit. This chain is Probable DNA-directed RNA polymerase II subunit RPB1 homolog, found in Acheta domesticus (House cricket).